A 131-amino-acid polypeptide reads, in one-letter code: Large ribosomal subunit protein bL17 (131 aa).

Belongs to the bacterial ribosomal protein bL17 family. As to quaternary structure, part of the 50S ribosomal subunit. Contacts protein L32.

The sequence is that of Large ribosomal subunit protein bL17 from Chromobacterium violaceum (strain ATCC 12472 / DSM 30191 / JCM 1249 / CCUG 213 / NBRC 12614 / NCIMB 9131 / NCTC 9757 / MK).